The primary structure comprises 307 residues: Aspartate carbamoyltransferase catalytic subunit (307 aa).

Carbamoyl phosphate-binding residues include arginine 56 and threonine 57. Lysine 84 lines the L-aspartate pocket. The carbamoyl phosphate site is built by arginine 106, histidine 136, and glutamine 139. 2 residues coordinate L-aspartate: arginine 169 and arginine 221. Alanine 262 and proline 263 together coordinate carbamoyl phosphate.

The protein belongs to the aspartate/ornithine carbamoyltransferase superfamily. ATCase family. In terms of assembly, heterododecamer (2C3:3R2) of six catalytic PyrB chains organized as two trimers (C3), and six regulatory PyrI chains organized as three dimers (R2).

The enzyme catalyses carbamoyl phosphate + L-aspartate = N-carbamoyl-L-aspartate + phosphate + H(+). It participates in pyrimidine metabolism; UMP biosynthesis via de novo pathway; (S)-dihydroorotate from bicarbonate: step 2/3. Catalyzes the condensation of carbamoyl phosphate and aspartate to form carbamoyl aspartate and inorganic phosphate, the committed step in the de novo pyrimidine nucleotide biosynthesis pathway. The chain is Aspartate carbamoyltransferase catalytic subunit from Streptococcus pneumoniae (strain 70585).